The sequence spans 190 residues: MAFIAKSFYDLSAISLDGEKVDFNTFRGRAVLIENVASLUGTTTRDFTQLNELQCRFPRRLVVLGFPCNQFGHQENCQNEEILNSLKYVRPGGGYQPTFTLVQKCEVNGQNEHPVFAYLKDKLPYPYDDPFSLMTDPKLIIWSPVRRSDVAWNFEKFLIGPEGEPFRRYSRTFPTINIEPDIKRLLKVAI.

The active site involves Sec-40. Position 40 (Sec-40) is a non-standard amino acid, selenocysteine.

This sequence belongs to the glutathione peroxidase family. In terms of assembly, homotetramer. As to expression, mostly in liver and gastrointestinal tract, not found in heart or kidney.

It is found in the cytoplasm. The protein resides in the cytosol. The catalysed reaction is 2 glutathione + H2O2 = glutathione disulfide + 2 H2O. It catalyses the reaction a hydroperoxy polyunsaturated fatty acid + 2 glutathione = a hydroxy polyunsaturated fatty acid + glutathione disulfide + H2O. The enzyme catalyses tert-butyl hydroperoxide + 2 glutathione = tert-butanol + glutathione disulfide + H2O. It carries out the reaction cumene hydroperoxide + 2 glutathione = 2-phenylpropan-2-ol + glutathione disulfide + H2O. The catalysed reaction is (13S)-hydroperoxy-(9Z,11E)-octadecadienoate + 2 glutathione = (13S)-hydroxy-(9Z,11E)-octadecadienoate + glutathione disulfide + H2O. It catalyses the reaction (5S)-hydroperoxy-(6E,8Z,11Z,14Z)-eicosatetraenoate + 2 glutathione = (5S)-hydroxy-(6E,8Z,11Z,14Z)-eicosatetraenoate + glutathione disulfide + H2O. The enzyme catalyses (12R)-hydroperoxy-(5Z,8Z,10E,14Z)-eicosatetraenoate + 2 glutathione = (12R)-hydroxy-(5Z,8Z,10E,14Z)-eicosatetraenoate + glutathione disulfide + H2O. It carries out the reaction (15S)-hydroperoxy-(5Z,8Z,11Z,13E)-eicosatetraenoate + 2 glutathione = (15S)-hydroxy-(5Z,8Z,11Z,13E)-eicosatetraenoate + glutathione disulfide + H2O. Functionally, catalyzes the reduction of hydroperoxides in a glutathione-dependent manner thus regulating cellular redox homeostasis. Can reduce small soluble hydroperoxides such as H2O2, cumene hydroperoxide and tert-butyl hydroperoxide, as well as several fatty acid-derived hydroperoxides. Cannot reduce phosphatidycholine hydroperoxide. The protein is Glutathione peroxidase 2 of Homo sapiens (Human).